The chain runs to 462 residues: Anthranilate synthase component 1 (462 aa).

L-tryptophan is bound by residues serine 37 and 244 to 246; that span reads PYM. Residue 279 to 280 coordinates chorismate; it reads GT. Glutamate 306 is a binding site for Mg(2+). Chorismate is bound by residues tyrosine 394, arginine 414, 428-430, and glycine 430; that span reads GAG. Glutamate 443 is a Mg(2+) binding site.

It belongs to the anthranilate synthase component I family. Heterotetramer consisting of two non-identical subunits: a beta subunit (TrpG) and a large alpha subunit (TrpE). The cofactor is Mg(2+).

It carries out the reaction chorismate + L-glutamine = anthranilate + pyruvate + L-glutamate + H(+). It functions in the pathway amino-acid biosynthesis; L-tryptophan biosynthesis; L-tryptophan from chorismate: step 1/5. Its activity is regulated as follows. Feedback inhibited by tryptophan. Its function is as follows. Part of a heterotetrameric complex that catalyzes the two-step biosynthesis of anthranilate, an intermediate in the biosynthesis of L-tryptophan. In the first step, the glutamine-binding beta subunit (TrpG) of anthranilate synthase (AS) provides the glutamine amidotransferase activity which generates ammonia as a substrate that, along with chorismate, is used in the second step, catalyzed by the large alpha subunit of AS (TrpE) to produce anthranilate. In the absence of TrpG, TrpE can synthesize anthranilate directly from chorismate and high concentrations of ammonia. This chain is Anthranilate synthase component 1 (trpE), found in Thermus thermophilus (strain ATCC 27634 / DSM 579 / HB8).